Consider the following 289-residue polypeptide: Purine nucleoside phosphorylase (289 aa).

Met-1 carries the N-acetylmethionine modification. Phosphate contacts are provided by residues Ser-33, His-64, and 84–86 (RFH). Residue Tyr-88 participates in a purine D-ribonucleoside binding. A phosphate-binding site is contributed by Ala-116. Residues Glu-201 and Met-219 each contribute to the a purine D-ribonucleoside site. Position 220 (Ser-220) interacts with phosphate. A purine D-ribonucleoside is bound by residues Asn-243 and His-257.

Belongs to the PNP/MTAP phosphorylase family. In terms of assembly, homotrimer.

Its subcellular location is the cytoplasm. It catalyses the reaction inosine + phosphate = alpha-D-ribose 1-phosphate + hypoxanthine. It carries out the reaction guanosine + phosphate = alpha-D-ribose 1-phosphate + guanine. The enzyme catalyses 2'-deoxyguanosine + phosphate = 2-deoxy-alpha-D-ribose 1-phosphate + guanine. The catalysed reaction is 2'-deoxyinosine + phosphate = 2-deoxy-alpha-D-ribose 1-phosphate + hypoxanthine. It functions in the pathway purine metabolism; purine nucleoside salvage. Catalyzes the phosphorolytic breakdown of the N-glycosidic bond in the beta-(deoxy)ribonucleoside molecules, with the formation of the corresponding free purine bases and pentose-1-phosphate. Preferentially acts on 6-oxopurine nucleosides including inosine and guanosine. The sequence is that of Purine nucleoside phosphorylase (Pnp) from Mus musculus (Mouse).